The sequence spans 242 residues: Probable transcriptional regulatory protein lp_2253 (242 aa).

Positions 1–21 (MSGHSKWHNIQGRKNAQDAKR) are disordered.

This sequence belongs to the TACO1 family.

It localises to the cytoplasm. This is Probable transcriptional regulatory protein lp_2253 from Lactiplantibacillus plantarum (strain ATCC BAA-793 / NCIMB 8826 / WCFS1) (Lactobacillus plantarum).